The sequence spans 544 residues: Matrilin-1 (544 aa).

The N-terminal stretch at 1–26 is a signal peptide; that stretch reads MRALSGPRLMLCGLLLLLFQAPCALG. Positions 42 to 217 constitute a VWFA 1 domain; the sequence is DLVFVVDSSR…SVIEKLSKKF (176 aa). Residue asparagine 77 is glycosylated (N-linked (GlcNAc...) asparagine). The EGF-like domain occupies 224–264; sequence VSDLCATGDHDCEQVCVSSPGSYTCACREGFTLNSDGKTCN. Disulfide bonds link cysteine 228–cysteine 239, cysteine 235–cysteine 248, and cysteine 250–cysteine 263. One can recognise a VWFA 2 domain in the interval 276–448; sequence DLVFLIDGSK…KTINQIGKKL (173 aa). Asparagine 345 carries an N-linked (GlcNAc...) asparagine glycan.

As to quaternary structure, homotrimer. Part of a complex composed of MATN1 (via VWFA1 domain), type 2 collagens and type 6 collagens. Forms a complex (via covalent bonds) with ACAN; the interaction increases in abundance with increasing age of the organism via an increase in occupancy of MATN1 binding sites. Interacts with COMP. Post-translationally, N-glycosylated; reduces binding affinity for type 2 collagens. As to expression, expressed in trachea from fetus into adulthood (at protein level).

It localises to the secreted. The protein resides in the extracellular space. It is found in the extracellular matrix. A major component of the extracellular matrix of non-articular cartilage. Binds to type 2 collagens and forms long concatenated protein networks as part of the extracellular matrix. Required for the network-like organization and bundling of collagen fibrils surrounding chondrocytes in the zones of maturation and hypertrophy. Required for mechanotransduction and adaption to mechanical loading in cartilage chondrocytes, resulting in an increase in expression of the extracellular matrix components ACAN and COL2A1. Acts as a moderator of angiogenesis in response to injury. The sequence is that of Matrilin-1 from Bos taurus (Bovine).